Consider the following 316-residue polypeptide: PAK4-inhibitor inka2 (316 aa).

Disordered regions lie at residues 43 to 74 (RSSP…SHRT) and 108 to 130 (YSEV…ESET). The segment covering 65-74 (RRDNRISHRT) has biased composition (basic and acidic residues). Residues 119–129 (EEDDIVEEESE) are compositionally biased toward acidic residues. The segment at 182 to 219 (DSQDWTGCLLSQSRSRQPLVLGDNSFADLVKQWMDLPE) is inka box.

This sequence belongs to the INKA family.

The protein localises to the nucleus. Its function is as follows. Inhibitor of the serine/threonine-protein kinase pak4/pak5. Acts by binding pak4/pak5 in a substrate-like manner, inhibiting the protein kinase activity. The polypeptide is PAK4-inhibitor inka2 (Xenopus laevis (African clawed frog)).